We begin with the raw amino-acid sequence, 394 residues long: Protein-glutamate methylesterase/protein-glutamine glutaminase of group 2 operon (394 aa).

The region spanning 21–139 is the Response regulatory domain; the sequence is RVMVVDDSAV…ELTGADTFKR (119 aa). A 4-aspartylphosphate modification is found at D72. The segment at 148-201 is disordered; that stretch reads LGAAARRSGPRREGTAAARPPGAAAQPTSGYTLPSPVRAKPETGPLTVRPLPPD. Low complexity predominate over residues 162 to 172; it reads TAAARPPGAAA. The CheB-type methylesterase domain maps to 200-382; sequence PDGRPDVIAI…SAILPLKEIG (183 aa). Residues S212, H238, and D334 contribute to the active site.

It belongs to the CheB family. In terms of processing, phosphorylated by CheA. Phosphorylation of the N-terminal regulatory domain activates the methylesterase activity.

It localises to the cytoplasm. The catalysed reaction is [protein]-L-glutamate 5-O-methyl ester + H2O = L-glutamyl-[protein] + methanol + H(+). It carries out the reaction L-glutaminyl-[protein] + H2O = L-glutamyl-[protein] + NH4(+). In terms of biological role, involved in chemotaxis. Part of a chemotaxis signal transduction system that modulates chemotaxis in response to various stimuli. Catalyzes the demethylation of specific methylglutamate residues introduced into the chemoreceptors (methyl-accepting chemotaxis proteins or MCP) by CheR. Also mediates the irreversible deamidation of specific glutamine residues to glutamic acid. The chain is Protein-glutamate methylesterase/protein-glutamine glutaminase of group 2 operon from Rhodospirillum centenum (strain ATCC 51521 / SW).